We begin with the raw amino-acid sequence, 246 residues long: 3-deoxy-manno-octulosonate cytidylyltransferase (246 aa).

The protein belongs to the KdsB family.

The protein localises to the cytoplasm. It carries out the reaction 3-deoxy-alpha-D-manno-oct-2-ulosonate + CTP = CMP-3-deoxy-beta-D-manno-octulosonate + diphosphate. The protein operates within nucleotide-sugar biosynthesis; CMP-3-deoxy-D-manno-octulosonate biosynthesis; CMP-3-deoxy-D-manno-octulosonate from 3-deoxy-D-manno-octulosonate and CTP: step 1/1. It functions in the pathway bacterial outer membrane biogenesis; lipopolysaccharide biosynthesis. Its function is as follows. Activates KDO (a required 8-carbon sugar) for incorporation into bacterial lipopolysaccharide in Gram-negative bacteria. In Bradyrhizobium diazoefficiens (strain JCM 10833 / BCRC 13528 / IAM 13628 / NBRC 14792 / USDA 110), this protein is 3-deoxy-manno-octulosonate cytidylyltransferase.